We begin with the raw amino-acid sequence, 147 residues long: Lysozyme C-2 (147 aa).

The first 18 residues, 1–18 (MKALVILGFLFLSVAVQG), serve as a signal peptide directing secretion. A C-type lysozyme domain is found at 19 to 147 (KVFERCELAR…VSSYVEGCTL (129 aa)). Intrachain disulfides connect Cys24-Cys145, Cys48-Cys133, Cys83-Cys99, and Cys95-Cys113. Catalysis depends on residues Glu53 and Asp71.

This sequence belongs to the glycosyl hydrolase 22 family. In terms of assembly, monomer. As to expression, stomach-specific.

The enzyme catalyses Hydrolysis of (1-&gt;4)-beta-linkages between N-acetylmuramic acid and N-acetyl-D-glucosamine residues in a peptidoglycan and between N-acetyl-D-glucosamine residues in chitodextrins.. Its function is as follows. Lysozymes have primarily a bacteriolytic function; those in tissues and body fluids are associated with the monocyte-macrophage system and enhance the activity of immunoagents. The sequence is that of Lysozyme C-2 (LYZ2) from Bos taurus (Bovine).